The chain runs to 334 residues: MERCSVAQQFEDRFHRKFYYLRLSVTDVCNFKCTYCLPDGYQPSGQKNSSFLNLSEIRRVVKAFADCGTSKVRITGGEPSLRKDFTDIIHTVASTQGIKRVATTTNGYRMEKHIGEWKEAGLNQINVSVDSLDPRMFHQITGENKFHQVMSGIDRAFEVGFEQVKVNVVLMKDLNHNELPAFLHWIKHRPIQLRFIELMQTGEMDTLFQQHHVSGVAIRNHLIANGWLLKVKAANDGPAQVFVHPDYQGEIGLIMPYEKDFCASCNRLRVSAKGKLHLCLFGDRGVELRDLLQQDDQESDLIARIQSELQTKSVSHFLNEGQTGMTPHLASIGG.

The Radical SAM core domain maps to 13 to 239 (RFHRKFYYLR…KVKAANDGPA (227 aa)). A GTP-binding site is contributed by arginine 22. [4Fe-4S] cluster-binding residues include cysteine 29 and cysteine 33. Position 35 (tyrosine 35) interacts with S-adenosyl-L-methionine. Cysteine 36 is a binding site for [4Fe-4S] cluster. Arginine 73 serves as a coordination point for GTP. Glycine 77 is a binding site for S-adenosyl-L-methionine. Threonine 104 contacts GTP. Position 128 (serine 128) interacts with S-adenosyl-L-methionine. Residue lysine 165 coordinates GTP. Residue methionine 199 participates in S-adenosyl-L-methionine binding. 2 residues coordinate [4Fe-4S] cluster: cysteine 262 and cysteine 265. 267 to 269 (RLR) provides a ligand contact to GTP. Cysteine 279 contacts [4Fe-4S] cluster.

The protein belongs to the radical SAM superfamily. MoaA family. As to quaternary structure, monomer and homodimer. The cofactor is [4Fe-4S] cluster.

The enzyme catalyses GTP + AH2 + S-adenosyl-L-methionine = (8S)-3',8-cyclo-7,8-dihydroguanosine 5'-triphosphate + 5'-deoxyadenosine + L-methionine + A + H(+). Its pathway is cofactor biosynthesis; molybdopterin biosynthesis. Catalyzes the cyclization of GTP to (8S)-3',8-cyclo-7,8-dihydroguanosine 5'-triphosphate. This Vibrio vulnificus (strain CMCP6) protein is GTP 3',8-cyclase.